Consider the following 466-residue polypeptide: uncharacterized protein (466 aa).

Residues 1–22 form a disordered region; the sequence is MKKNNERVNTNPSLISKSYNMK. A compositionally biased stretch (polar residues) spans 7–19; that stretch reads RVNTNPSLISKSY. Phosphoserine occurs at positions 40 and 42. The 76-residue stretch at 108–183 folds into the RRM domain; it reads YFVHMDNISP…RLISATITNH (76 aa). Positions 186–207 are disordered; that stretch reads RLPNAEHLESSTKTKDESQDKD. The segment covering 188 to 207 has biased composition (basic and acidic residues); it reads PNAEHLESSTKTKDESQDKD. A CID domain is found at 209-368; the sequence is LTKLDRAKLE…RAWRNFSGNT (160 aa). Phosphoserine is present on S371. Residues 425 to 436 are compositionally biased toward low complexity; it reads STETSSSSSPQP. The interval 425–448 is disordered; the sequence is STETSSSSSPQPTEERKAKFKPSF.

It is found in the nucleus. The protein localises to the cytoplasm. This is an uncharacterized protein from Schizosaccharomyces pombe (strain 972 / ATCC 24843) (Fission yeast).